Reading from the N-terminus, the 480-residue chain is Adenosylhomocysteinase (480 aa).

Residues Thr63, Asp142, and Glu203 each contribute to the substrate site. NAD(+) is bound at residue 204–206 (TTT). Substrate-binding residues include Lys233 and Asp237. Residues Asn238, 267 to 272 (GYGDVG), Glu290, Asn325, 346 to 348 (IGH), and Asn394 contribute to the NAD(+) site.

Belongs to the adenosylhomocysteinase family. The cofactor is NAD(+).

It is found in the cytoplasm. It catalyses the reaction S-adenosyl-L-homocysteine + H2O = L-homocysteine + adenosine. It participates in amino-acid biosynthesis; L-homocysteine biosynthesis; L-homocysteine from S-adenosyl-L-homocysteine: step 1/1. May play a key role in the regulation of the intracellular concentration of adenosylhomocysteine. This is Adenosylhomocysteinase from Xanthomonas axonopodis pv. citri (strain 306).